We begin with the raw amino-acid sequence, 344 residues long: Protein RecA (344 aa).

65 to 72 (GPESSGKT) is an ATP binding site.

The protein belongs to the RecA family.

Its subcellular location is the cytoplasm. Can catalyze the hydrolysis of ATP in the presence of single-stranded DNA, the ATP-dependent uptake of single-stranded DNA by duplex DNA, and the ATP-dependent hybridization of homologous single-stranded DNAs. It interacts with LexA causing its activation and leading to its autocatalytic cleavage. The chain is Protein RecA from Xanthomonas oryzae pv. oryzae (strain PXO99A).